We begin with the raw amino-acid sequence, 79 residues long: Sec-independent protein translocase protein TatA (79 aa).

A helical transmembrane segment spans residues 1-21 (MGGWSSPSHWLIILLIVVLLF). Residues 52 to 61 (KNTQKIEENK) are compositionally biased toward basic and acidic residues. The interval 52 to 79 (KNTQKIEENKNTTNNTSADASIDKTKKA) is disordered.

It belongs to the TatA/E family. The Tat system comprises two distinct complexes: a TatABC complex, containing multiple copies of TatA, TatB and TatC subunits, and a separate TatA complex, containing only TatA subunits. Substrates initially bind to the TatABC complex, which probably triggers association of the separate TatA complex to form the active translocon.

It localises to the cell inner membrane. Part of the twin-arginine translocation (Tat) system that transports large folded proteins containing a characteristic twin-arginine motif in their signal peptide across membranes. TatA could form the protein-conducting channel of the Tat system. The protein is Sec-independent protein translocase protein TatA of Campylobacter jejuni subsp. jejuni serotype O:6 (strain 81116 / NCTC 11828).